A 360-amino-acid polypeptide reads, in one-letter code: Phospho-N-acetylmuramoyl-pentapeptide-transferase (360 aa).

Helical transmembrane passes span 27-47, 70-90, 93-113, 134-154, 168-188, 205-225, 239-259, 262-282, 288-308, and 337-357; these read GALITAAFIVFLFGPAIISSL, GTPTMGGLMIFSGILGSSILW, LSSVYVWVVLMVMVGFGAIGF, LALEFVIAGFAAWIIMSAGQE, LLLNLGIFFIPFAAFVIVGAG, VMVAAASFGVIAYLSGNAIFA, LSVILGAVIGAGLGFLWFNAP, AIFMGDTGSLALGGLIGTVAV, IVLAIIGGLFVIEILSVIIQV, and QVVIRFWIIAVVLALIGLSTL.

Belongs to the glycosyltransferase 4 family. MraY subfamily. Mg(2+) is required as a cofactor.

It localises to the cell inner membrane. It catalyses the reaction UDP-N-acetyl-alpha-D-muramoyl-L-alanyl-gamma-D-glutamyl-meso-2,6-diaminopimeloyl-D-alanyl-D-alanine + di-trans,octa-cis-undecaprenyl phosphate = di-trans,octa-cis-undecaprenyl diphospho-N-acetyl-alpha-D-muramoyl-L-alanyl-D-glutamyl-meso-2,6-diaminopimeloyl-D-alanyl-D-alanine + UMP. Its pathway is cell wall biogenesis; peptidoglycan biosynthesis. Functionally, catalyzes the initial step of the lipid cycle reactions in the biosynthesis of the cell wall peptidoglycan: transfers peptidoglycan precursor phospho-MurNAc-pentapeptide from UDP-MurNAc-pentapeptide onto the lipid carrier undecaprenyl phosphate, yielding undecaprenyl-pyrophosphoryl-MurNAc-pentapeptide, known as lipid I. The chain is Phospho-N-acetylmuramoyl-pentapeptide-transferase from Chelativorans sp. (strain BNC1).